The sequence spans 135 residues: Small ribosomal subunit protein bS6 (135 aa).

The interval 96–135 (HAEGPSIQMQKRDERERGDRGDRSDRGDRGDRGDRGGFRR) is disordered. Over residues 105 to 135 (QKRDERERGDRGDRSDRGDRGDRGDRGGFRR) the composition is skewed to basic and acidic residues.

It belongs to the bacterial ribosomal protein bS6 family.

Functionally, binds together with bS18 to 16S ribosomal RNA. This is Small ribosomal subunit protein bS6 from Cereibacter sphaeroides (strain ATCC 17029 / ATH 2.4.9) (Rhodobacter sphaeroides).